The chain runs to 222 residues: Phosphoribosylformylglycinamidine synthase subunit PurQ (222 aa).

The 220-residue stretch at 3–222 folds into the Glutamine amidotransferase type-1 domain; that stretch reads AAVVVFPGSN…RALSGLLTDA (220 aa). Cys86 (nucleophile) is an active-site residue. Residues His194 and Glu196 contribute to the active site.

In terms of assembly, part of the FGAM synthase complex composed of 1 PurL, 1 PurQ and 2 PurS subunits.

It localises to the cytoplasm. It catalyses the reaction N(2)-formyl-N(1)-(5-phospho-beta-D-ribosyl)glycinamide + L-glutamine + ATP + H2O = 2-formamido-N(1)-(5-O-phospho-beta-D-ribosyl)acetamidine + L-glutamate + ADP + phosphate + H(+). It carries out the reaction L-glutamine + H2O = L-glutamate + NH4(+). The protein operates within purine metabolism; IMP biosynthesis via de novo pathway; 5-amino-1-(5-phospho-D-ribosyl)imidazole from N(2)-formyl-N(1)-(5-phospho-D-ribosyl)glycinamide: step 1/2. Functionally, part of the phosphoribosylformylglycinamidine synthase complex involved in the purines biosynthetic pathway. Catalyzes the ATP-dependent conversion of formylglycinamide ribonucleotide (FGAR) and glutamine to yield formylglycinamidine ribonucleotide (FGAM) and glutamate. The FGAM synthase complex is composed of three subunits. PurQ produces an ammonia molecule by converting glutamine to glutamate. PurL transfers the ammonia molecule to FGAR to form FGAM in an ATP-dependent manner. PurS interacts with PurQ and PurL and is thought to assist in the transfer of the ammonia molecule from PurQ to PurL. In Ruegeria sp. (strain TM1040) (Silicibacter sp.), this protein is Phosphoribosylformylglycinamidine synthase subunit PurQ.